The primary structure comprises 706 residues: D-(-)-3-hydroxybutyrate oligomer hydrolase (706 aa).

The N-terminal stretch at 1-32 (MTTTSKNCLTLTSIAAAVAAVLVLSACGGGSA) is a signal peptide. The active-site Charge relay system is the Ser311.

This sequence belongs to the D-(-)-3-hydroxybutyrate oligomer hydrolase family.

Its subcellular location is the secreted. It catalyses the reaction (3R)-hydroxybutanoate dimer + H2O = 2 (R)-3-hydroxybutanoate + H(+). The protein operates within lipid metabolism; butanoate metabolism. Functionally, participates in the degradation of poly-3-hydroxybutyrate (PHB). It works downstream of poly(3-hydroxybutyrate) depolymerase, hydrolyzing D(-)-3-hydroxybutyrate oligomers of various length (3HB-oligomers) into 3HB-monomers. The sequence is that of D-(-)-3-hydroxybutyrate oligomer hydrolase from Polaromonas sp. (strain JS666 / ATCC BAA-500).